A 511-amino-acid chain; its full sequence is Caspase-8 (511 aa).

The propeptide occupies 1 to 242 (MSGHNILTQL…MDGNGIANES (242 aa)). Residues H352 and C393 contribute to the active site. A propeptide spanning residues 406–415 (KINASTKSPC) is cleaved from the precursor.

Belongs to the peptidase C14A family. Heterotetramer that consists of two anti-parallel arranged heterodimers, each one formed by a 15 kDa (caspase-8 subunit p15) and a 10 kDa (caspase-8 subunit p10) subunit. Interacts with the N-terminus of Fadd.

The protein localises to the cytoplasm. The catalysed reaction is Strict requirement for Asp at position P1 and has a preferred cleavage sequence of (Leu/Asp/Val)-Glu-Thr-Asp-|-(Gly/Ser/Ala).. Its function is as follows. Effector of the programmed cell death (PCD) activators rpr, grim and W. May play an apoptotic role in the germline as well as soma. Role in immune response, required to resist Gram-negative bacterial infections by regulating DptA. Fadd interacts with Dredd, Fadd promotes cleavage of Dredd and is necessary and sufficient for enhancing Dredd-induced apoptosis. The sequence is that of Caspase-8 from Drosophila pseudoobscura pseudoobscura (Fruit fly).